We begin with the raw amino-acid sequence, 352 residues long: 3-dehydroquinate synthase (352 aa).

Residues 60 to 65, 118 to 119, Lys-131, Lys-140, and 158 to 161 contribute to the NAD(+) site; these read DGEGAK, TT, and FLET. Residues Glu-173, His-237, and His-253 each coordinate Zn(2+).

It belongs to the sugar phosphate cyclases superfamily. Dehydroquinate synthase family. The cofactor is NAD(+). Co(2+) is required as a cofactor. Zn(2+) serves as cofactor.

Its subcellular location is the cytoplasm. The enzyme catalyses 7-phospho-2-dehydro-3-deoxy-D-arabino-heptonate = 3-dehydroquinate + phosphate. It functions in the pathway metabolic intermediate biosynthesis; chorismate biosynthesis; chorismate from D-erythrose 4-phosphate and phosphoenolpyruvate: step 2/7. Its function is as follows. Catalyzes the conversion of 3-deoxy-D-arabino-heptulosonate 7-phosphate (DAHP) to dehydroquinate (DHQ). The chain is 3-dehydroquinate synthase from Sulfurisphaera tokodaii (strain DSM 16993 / JCM 10545 / NBRC 100140 / 7) (Sulfolobus tokodaii).